Consider the following 205-residue polypeptide: Heme ligase (205 aa).

Residues 48-203 (KRTIINLIYS…GVVHIVDKPI (156 aa)) enclose the FAS1 domain. The required for binding to host hemoglobin stretch occupies residues 154–172 (LRNLLNNDLIVKIEGEFKH). Heme binding domain stretches follow at residues 171-181 (KHCNHSIYLNG) and 191-200 (CHNGVVHIVD).

Component of the hemozoin formation complex (HFC) composed of falcipains FP2A and/or FP2B, plasmepsins PMII, PMIII/HAP and PMIV, heme detoxifying protein HDP and falcilysin FLN. The HFC complex is involved in hemoglobin degradation and detoxification of heme in the food vacuole during the asexual blood stage. Interacts with falcipain 2; the interaction is direct and enhances HDP catalytic activity. Interacts with host hemoglobin.

The protein resides in the vacuole. It is found in the host cytoplasm. Its subcellular location is the host cytosol. It carries out the reaction 2 Fe(III)-heme b = beta-hematin. Heme detoxifying enzyme that converts heme to crystalline hemozoin (beta-hematin) to protect the organism from the toxic effects of heme. During its development, P.falciparum proteolyzes vast amounts of host hemoglobin, leading to heme release. In Plasmodium falciparum (isolate 3D7), this protein is Heme ligase.